The primary structure comprises 320 residues: Glucokinase (320 aa).

12-17 (GDIGGT) provides a ligand contact to ATP.

The protein belongs to the bacterial glucokinase family.

Its subcellular location is the cytoplasm. It carries out the reaction D-glucose + ATP = D-glucose 6-phosphate + ADP + H(+). The chain is Glucokinase from Nitrobacter hamburgensis (strain DSM 10229 / NCIMB 13809 / X14).